Reading from the N-terminus, the 202-residue chain is MSRYRGPRVKIIRRLGALPGLTNKIPQLKSGYTNQSVSNKKISQYRIRLEEKQKLRFHYGITERQLLKYVRIARGAKGSTGQISLQSSEMRLDNIIFRLGIAPTIPGARQLVNHRHILVNNNIVNIPSYRCKPQDFITIKNSQKSQTIITKNIELSQKYQIPNHLTFNSLEKKGLVNQILDRESIGLKINELLVVEYYSRQA.

One can recognise an S4 RNA-binding domain in the interval 90–158 (MRLDNIIFRL…ITKNIELSQK (69 aa)).

Belongs to the universal ribosomal protein uS4 family. In terms of assembly, part of the 30S ribosomal subunit. Contacts protein S5. The interaction surface between S4 and S5 is involved in control of translational fidelity.

The protein resides in the plastid. Its subcellular location is the chloroplast. Functionally, one of the primary rRNA binding proteins, it binds directly to 16S rRNA where it nucleates assembly of the body of the 30S subunit. Its function is as follows. With S5 and S12 plays an important role in translational accuracy. The chain is Small ribosomal subunit protein uS4c (rps4) from Marchantia romanica (Liverwort).